The sequence spans 131 residues: Small ribosomal subunit protein uS9 (131 aa).

Belongs to the universal ribosomal protein uS9 family.

The sequence is that of Small ribosomal subunit protein uS9 from Actinobacillus pleuropneumoniae serotype 7 (strain AP76).